The chain runs to 109 residues: Aquaporin-2 (109 aa).

The Cytoplasmic portion of the chain corresponds to 1 to 6; that stretch reads SIAFSR. A helical transmembrane segment spans residues 7–27; that stretch reads AVFSEFLATLLFVFFGLGSAL. At 28-35 the chain is on the extracellular side; that stretch reads NWPQALPS. A helical membrane pass occupies residues 36–54; sequence VLQIAMAFGLAIGTLVQAL. At 55–59 the chain is on the cytoplasmic side; the sequence is GHISG. The segment at residues 60-69 is an intramembrane region (discontinuously helical); it reads AHINPAVTVA. An NPA 1 motif is present at residues 63-65; sequence NPA. The Cytoplasmic segment spans residues 70-80; sequence CLVGCHVSFLR. The helical transmembrane segment at 81-102 threads the bilayer; that stretch reads ATFYLAAQLLGAVAGAAILHEI. Residues 103-109 are Extracellular-facing; it reads TPPDIRG.

The protein belongs to the MIP/aquaporin (TC 1.A.8) family. As to quaternary structure, homotetramer. In terms of processing, serine phosphorylation is necessary and sufficient for expression at the apical membrane. Endocytosis is not phosphorylation-dependent. N-glycosylated.

Its subcellular location is the apical cell membrane. The protein localises to the basolateral cell membrane. The protein resides in the cell membrane. It is found in the cytoplasmic vesicle membrane. It localises to the golgi apparatus. Its subcellular location is the trans-Golgi network membrane. The catalysed reaction is H2O(in) = H2O(out). It catalyses the reaction glycerol(in) = glycerol(out). Forms a water-specific channel that provides the plasma membranes of renal collecting duct with high permeability to water, thereby permitting water to move in the direction of an osmotic gradient. Plays an essential role in renal water homeostasis. Could also be permeable to glycerol. This is Aquaporin-2 from Dugong dugon (Dugong).